A 116-amino-acid chain; its full sequence is Large ribosomal subunit protein bL20 (116 aa).

The protein belongs to the bacterial ribosomal protein bL20 family.

Its function is as follows. Binds directly to 23S ribosomal RNA and is necessary for the in vitro assembly process of the 50S ribosomal subunit. It is not involved in the protein synthesizing functions of that subunit. This Phocaeicola vulgatus (strain ATCC 8482 / DSM 1447 / JCM 5826 / CCUG 4940 / NBRC 14291 / NCTC 11154) (Bacteroides vulgatus) protein is Large ribosomal subunit protein bL20.